The primary structure comprises 511 residues: Myrosinase 5 (511 aa).

The first 23 residues, 1–23 (MAIPKAHYSLAVLVLLFVVVSSS), serve as a signal peptide directing secretion. 3 cysteine pairs are disulfide-bonded: C31–C450, C39–C445, and C230–C233. N46 and N53 each carry an N-linked (GlcNAc...) asparagine glycan. Residues Q64, H165, and 210–211 (NQ) each bind a beta-D-glucoside. An N-linked (GlcNAc...) asparagine glycan is attached at N222. A beta-D-glucoside is bound by residues Y351 and E418. E418 serves as the catalytic Nucleophile. Residue N428 is glycosylated (N-linked (GlcNAc...) asparagine). Residues W467, 474–475 (EF), and F483 each bind a beta-D-glucoside. N-linked (GlcNAc...) asparagine glycosylation occurs at N489.

This sequence belongs to the glycosyl hydrolase 1 family. Specifically expressed in roots.

The enzyme catalyses a thioglucoside + H2O = a sugar + a thiol.. The catalysed reaction is Hydrolysis of terminal, non-reducing beta-D-glucosyl residues with release of beta-D-glucose.. In terms of biological role, hydrolyzes sinigrin and, with lower efficiency, p-nitrophenyl beta-D-glucoside. The polypeptide is Myrosinase 5 (Arabidopsis thaliana (Mouse-ear cress)).